A 134-amino-acid chain; its full sequence is Terepressin/terephysin (134 aa).

A signal peptide spans methionine 1–glycine 33. Cysteine 34 and cysteine 39 are oxidised to a cystine. Residues lysine 44–valine 50 constitute a propeptide that is removed on maturation. Cystine bridges form between cysteine 56/cysteine 100, cysteine 59/cysteine 73, cysteine 67/cysteine 90, cysteine 74/cysteine 80, cysteine 107/cysteine 121, cysteine 115/cysteine 133, and cysteine 122/cysteine 127.

This sequence belongs to the vasopressin/oxytocin family. Post-translationally, contains 7 disulfide bonds. In terms of tissue distribution, expressed by the venom duct.

It is found in the secreted. The sequence is that of Terepressin/terephysin from Terebra anilis (Auger snail).